The sequence spans 134 residues: uncharacterized protein (134 aa).

The helical transmembrane segment at asparagine 4–glutamate 24 threads the bilayer.

It localises to the membrane. This is an uncharacterized protein from Invertebrate iridescent virus 6 (IIV-6).